Consider the following 566-residue polypeptide: KsdD-like steroid dehydrogenase Rv0785 (566 aa).

Position 23-54 (23-54 (DAIVVGAGLAGLVAACELADRGLRVLILDQEN)) interacts with FAD.

The protein belongs to the FAD-dependent oxidoreductase 2 family. FAD serves as cofactor.

It participates in lipid metabolism; steroid biosynthesis. Able to catalyze the elimination of the C-1 and C-2 hydrogen atoms of the A-ring from the polycyclic ring structure of 3-ketosteroids. In Mycobacterium tuberculosis (strain ATCC 25618 / H37Rv), this protein is KsdD-like steroid dehydrogenase Rv0785.